The sequence spans 487 residues: 6-phosphogluconate dehydrogenase, decarboxylating 1, chloroplastic (487 aa).

Met1 carries the post-translational modification N-acetylmethionine. NADP(+) contacts are provided by residues 13–18 (GLAVMG), 36–38 (NRT), 80–82 (VKA), and Asn108. Residues Asn108 and 134 to 136 (SGG) contribute to the substrate site. The Proton acceptor role is filled by Lys188. Substrate is bound at residue 191–192 (HN). Glu195 (proton donor) is an active-site residue. 5 residues coordinate substrate: Tyr196, Lys266, Arg293, Arg458, and His464.

This sequence belongs to the 6-phosphogluconate dehydrogenase family. In terms of assembly, forms homodimer. Forms heterodimers with PGD2 or PGD3.

It localises to the plastid. The protein resides in the chloroplast. The protein localises to the cytoplasm. It is found in the cytosol. It catalyses the reaction 6-phospho-D-gluconate + NADP(+) = D-ribulose 5-phosphate + CO2 + NADPH. It participates in carbohydrate degradation; pentose phosphate pathway; D-ribulose 5-phosphate from D-glucose 6-phosphate (oxidative stage): step 3/3. In terms of biological role, catalyzes the oxidative decarboxylation of 6-phosphogluconate to ribulose 5-phosphate and CO(2), with concomitant reduction of NADP to NADPH. The protein is 6-phosphogluconate dehydrogenase, decarboxylating 1, chloroplastic of Arabidopsis thaliana (Mouse-ear cress).